The sequence spans 283 residues: 2-heptyl-4(1H)-quinolone synthase subunit PqsB (283 aa).

It belongs to the thiolase-like superfamily. FabH family. Forms a tight complex with PqsC.

It localises to the cytoplasm. Its activity is regulated as follows. Activity of the complex is inhibited by 2-aminoacetophenone (2-AA). Functionally, required for the biosynthesis of the quorum-sensing signaling molecules 2-heptyl-4(1H)-quinolone (HHQ) and 2-heptyl-3-hydroxy-4(1H)-quinolone (Pseudomonas quinolone signal or PQS), which are important for biofilm formation and virulence. The PqsC/PqsB complex catalyzes the condensation of 2-aminobenzoylacetate (2-ABA) and octanoyl-CoA to form HHQ. PqsB, together with PqsC, catalyzes the coupling of 2-ABA with the octanoate group, leading to decarboxylation and dehydration, and resulting in closure of the quinoline ring. PqsB is probably required for the proper folding of PqsC rather than for a direct enzymatic role in the process. This is 2-heptyl-4(1H)-quinolone synthase subunit PqsB from Pseudomonas aeruginosa (strain ATCC 15692 / DSM 22644 / CIP 104116 / JCM 14847 / LMG 12228 / 1C / PRS 101 / PAO1).